Here is a 501-residue protein sequence, read N- to C-terminus: Actin-binding protein WASF3 (501 aa).

The stretch at 57-93 forms a coiled coil; that stretch reads NEANNFYIRANSLQDRIDRLAVKVTQLDSTVEEVSLQ. Y151 is modified (phosphotyrosine; by ABL1). The stretch at 162 to 206 forms a coiled coil; that stretch reads KEKMLQDTEDKRKEKRRQKEQKRVDGTTREVKKVRKARNRRQEWN. The interval 170–443 is disordered; sequence EDKRKEKRRQ…PPISDARSDL (274 aa). The span at 182–192 shows a compositional bias: basic and acidic residues; the sequence is QKRVDGTTREV. The span at 219–237 shows a compositional bias: polar residues; sequence RLSQSVHHGASSEGSLSPD. A Phosphotyrosine; by ABL1 modification is found at Y248. A compositionally biased stretch (polar residues) spans 256–267; sequence HALQAQPATPSY. Over residues 302-312 the composition is skewed to pro residues; that stretch reads QQPPPPPPPQA. Phosphotyrosine; by ABL1 is present on Y337. 2 stretches are compositionally biased toward pro residues: residues 341–352 and 394–410; these read SGPPPPPPPPMI and APPP…PPGP. Residues 411-422 show a composition bias toward low complexity; the sequence is SSLSSSPMHGPP. The WH2 domain occupies 439-456; it reads ARSDLLAAIRMGIQLKKV. Y485 is subject to Phosphotyrosine; by ABL1.

Belongs to the SCAR/WAVE family. In terms of assembly, binds actin and the Arp2/3 complex. Phosphorylation by ABL1 promotes lamellipodia formation and cell migration.

It localises to the cytoplasm. The protein resides in the cytoskeleton. Functionally, downstream effector molecules involved in the transmission of signals from tyrosine kinase receptors and small GTPases to the actin cytoskeleton. Plays a role in the regulation of cell morphology and cytoskeletal organization. Required in the control of cell shape. The chain is Actin-binding protein WASF3 (Wasf3) from Mus musculus (Mouse).